We begin with the raw amino-acid sequence, 514 residues long: Cobyric acid synthase (514 aa).

A GATase cobBQ-type domain is found at 263 to 457; it reads ALDVAVIRLP…LHGIFDNDPL (195 aa). The active-site Nucleophile is C344. H449 is a catalytic residue.

The protein belongs to the CobB/CobQ family. CobQ subfamily.

It functions in the pathway cofactor biosynthesis; adenosylcobalamin biosynthesis. Functionally, catalyzes amidations at positions B, D, E, and G on adenosylcobyrinic A,C-diamide. NH(2) groups are provided by glutamine, and one molecule of ATP is hydrogenolyzed for each amidation. This is Cobyric acid synthase from Desulfitobacterium hafniense (strain DSM 10664 / DCB-2).